The primary structure comprises 507 residues: ATP synthase subunit alpha, chloroplastic (507 aa).

170–177 (GDRQTGKT) is an ATP binding site.

Belongs to the ATPase alpha/beta chains family. As to quaternary structure, F-type ATPases have 2 components, CF(1) - the catalytic core - and CF(0) - the membrane proton channel. CF(1) has five subunits: alpha(3), beta(3), gamma(1), delta(1), epsilon(1). CF(0) has four main subunits: a, b, b' and c.

It localises to the plastid. The protein resides in the chloroplast thylakoid membrane. The catalysed reaction is ATP + H2O + 4 H(+)(in) = ADP + phosphate + 5 H(+)(out). Produces ATP from ADP in the presence of a proton gradient across the membrane. The alpha chain is a regulatory subunit. The polypeptide is ATP synthase subunit alpha, chloroplastic (Lemna minor (Common duckweed)).